The sequence spans 267 residues: 5'-nucleotidase SurE (267 aa).

Positions 9, 10, 40, and 97 each coordinate a divalent metal cation.

The protein belongs to the SurE nucleotidase family. Requires a divalent metal cation as cofactor.

It is found in the cytoplasm. The catalysed reaction is a ribonucleoside 5'-phosphate + H2O = a ribonucleoside + phosphate. Nucleotidase that shows phosphatase activity on nucleoside 5'-monophosphates. In Helicobacter pylori (strain J99 / ATCC 700824) (Campylobacter pylori J99), this protein is 5'-nucleotidase SurE.